The chain runs to 227 residues: Ribose-5-phosphate isomerase A (227 aa).

Substrate-binding positions include 26–29, 82–85, and 95–98; these read TGST, DGAD, and KGGG. Catalysis depends on Glu-104, which acts as the Proton acceptor. Lys-122 is a substrate binding site.

The protein belongs to the ribose 5-phosphate isomerase family. As to quaternary structure, homodimer.

The enzyme catalyses aldehydo-D-ribose 5-phosphate = D-ribulose 5-phosphate. Its pathway is carbohydrate degradation; pentose phosphate pathway; D-ribose 5-phosphate from D-ribulose 5-phosphate (non-oxidative stage): step 1/1. Functionally, catalyzes the reversible conversion of ribose-5-phosphate to ribulose 5-phosphate. In Streptococcus equi subsp. zooepidemicus (strain MGCS10565), this protein is Ribose-5-phosphate isomerase A.